Consider the following 1050-residue polypeptide: Self-sufficient cytochrome P450 monooxygenase CYP505E3 (1050 aa).

A heme-binding site is contributed by cysteine 406. Residues 459–481 (RGQSATGLSQGSMSASGATSSVA) show a composition bias toward polar residues. The interval 459–495 (RGQSATGLSQGSMSASGATSSVASPGPPAATGAQSNP) is disordered. The Flavodoxin-like domain maps to 501–641 (ISFFYGSNSG…DLELWEETNL (141 aa)). FMN is bound by residues 507-511 (SNSGT) and 585-617 (VFGCGHHDWAKTFYRIPILIDDLMHKAGATRLT). The FAD-binding FR-type domain occupies 679–907 (RGLVEAKVTA…RPAKDAFHLP (229 aa)).

In the N-terminal section; belongs to the cytochrome P450 family. The cofactor is FAD. FMN is required as a cofactor. Heme serves as cofactor.

It catalyses the reaction 2 oxidized [cytochrome P450] + NADPH = 2 reduced [cytochrome P450] + NADP(+) + H(+). The catalysed reaction is an organic molecule + reduced [NADPH--hemoprotein reductase] + O2 = an alcohol + oxidized [NADPH--hemoprotein reductase] + H2O + H(+). The enzyme catalyses decane + reduced [NADPH--hemoprotein reductase] + O2 = 3-decanol + oxidized [NADPH--hemoprotein reductase] + H2O + H(+). It carries out the reaction dodecane + reduced [NADPH--hemoprotein reductase] + O2 = 5-dodecanol + oxidized [NADPH--hemoprotein reductase] + H2O + H(+). It catalyses the reaction tetradecane + reduced [NADPH--hemoprotein reductase] + O2 = 7-tetradecanol + oxidized [NADPH--hemoprotein reductase] + H2O + H(+). The catalysed reaction is hexadecane + reduced [NADPH--hemoprotein reductase] + O2 = 9-hexadecanol + oxidized [NADPH--hemoprotein reductase] + H2O + H(+). The enzyme catalyses dodecanoate + reduced [NADPH--hemoprotein reductase] + O2 = 5-hydroxydodecanoate + oxidized [NADPH--hemoprotein reductase] + H2O + H(+). It carries out the reaction tetradecanoate + reduced [NADPH--hemoprotein reductase] + O2 = 7-hydroxytetradecanoate + oxidized [NADPH--hemoprotein reductase] + H2O + H(+). It catalyses the reaction hexadecanoate + reduced [NADPH--hemoprotein reductase] + O2 = 9-hydroxyhexadecanoate + oxidized [NADPH--hemoprotein reductase] + H2O + H(+). The catalysed reaction is decan-1-ol + reduced [NADPH--hemoprotein reductase] + O2 = 1,3-decanediol + oxidized [NADPH--hemoprotein reductase] + H2O + H(+). The enzyme catalyses decan-1-ol + reduced [NADPH--hemoprotein reductase] + O2 = 1,7-decanediol + oxidized [NADPH--hemoprotein reductase] + H2O + H(+). It carries out the reaction dodecan-1-ol + reduced [NADPH--hemoprotein reductase] + O2 = 1,5-dodecanediol + oxidized [NADPH--hemoprotein reductase] + H2O + H(+). It catalyses the reaction dodecan-1-ol + reduced [NADPH--hemoprotein reductase] + O2 = 1,4-dodecanediol + oxidized [NADPH--hemoprotein reductase] + H2O + H(+). The catalysed reaction is dodecan-1-ol + reduced [NADPH--hemoprotein reductase] + O2 = 1,6-dodecanediol + oxidized [NADPH--hemoprotein reductase] + H2O + H(+). In terms of biological role, self-sufficient cytochrome P450 monooxygenase that catalyzes the regioselective in-chain hydroxylation of alkanes, fatty alcohols, and fatty acids at the omega-7 position. Performs hydroxylation of C10-C16 n-alkanes and C12 and C14 fatty alcohols; and thereby enables the one step biocatalytic synthesis of rare alcohols such as 5-dodecanol and 7-tetradecanol. Converts 1-dodecanol into 1,5-dodecanediol as major product with very little sub-terminally hydroxylated products with the 1,4-dodecanediol and 1,6-dodecanediol more abundant. Does not use hexadecanediol nor decanoic acid as substrates. Converts dodecanoic acid to 5-hydroxydodecanoic acid which can be further converted into delta-dodecalactone by lactonization of the 5-hydroxy acid at low pH. Also gives sub-terminal hydroxylation of dodecanoic acid with 9-hydroxydodecanoic acid being the second most abundant product. The C14 and C16 fatty acids are double hydroxylated to yield dihydroxy acids hydroxylated at both the omega-7 position and a sub-terminal position (omega-1, omega-2, or omega-3). This Aspergillus terreus (strain NIH 2624 / FGSC A1156) protein is Self-sufficient cytochrome P450 monooxygenase CYP505E3.